A 445-amino-acid polypeptide reads, in one-letter code: Argininosuccinate synthase (445 aa).

ATP is bound by residues 17–25 (AFSGGLDTS) and alanine 43. Tyrosine 99 contributes to the L-citrulline binding site. Residues glycine 129 and threonine 131 each contribute to the ATP site. L-aspartate is bound by residues threonine 131, asparagine 135, and aspartate 136. Asparagine 135 is a binding site for L-citrulline. Aspartate 136 serves as a coordination point for ATP. Arginine 139 and serine 192 together coordinate L-citrulline. Aspartate 194 is a binding site for ATP. L-citrulline contacts are provided by threonine 201, glutamate 203, and glutamate 280.

Belongs to the argininosuccinate synthase family. Type 2 subfamily. Homotetramer.

The protein resides in the cytoplasm. The catalysed reaction is L-citrulline + L-aspartate + ATP = 2-(N(omega)-L-arginino)succinate + AMP + diphosphate + H(+). It participates in amino-acid biosynthesis; L-arginine biosynthesis; L-arginine from L-ornithine and carbamoyl phosphate: step 2/3. This chain is Argininosuccinate synthase, found in Afipia carboxidovorans (strain ATCC 49405 / DSM 1227 / KCTC 32145 / OM5) (Oligotropha carboxidovorans).